A 144-amino-acid chain; its full sequence is MLQPKKTKFRRQQKGRAKGNAQRGNQLAFGSFGIKALETKWITGRQIEAARIAVTRYMQRQGQIWIRIFPDKPITRKPADVRMGKGKGSPEGFVAPVTPGRIIIEAEGVSYEIAKEALRLAAQKLPITTKFVVRRDYDIQNQNA.

Over residues 1–17 (MLQPKKTKFRRQQKGRA) the composition is skewed to basic residues. Positions 1 to 22 (MLQPKKTKFRRQQKGRAKGNAQ) are disordered.

It belongs to the universal ribosomal protein uL16 family. As to quaternary structure, part of the 50S ribosomal subunit.

Binds 23S rRNA and is also seen to make contacts with the A and possibly P site tRNAs. The chain is Large ribosomal subunit protein uL16 from Bacteroides fragilis (strain ATCC 25285 / DSM 2151 / CCUG 4856 / JCM 11019 / LMG 10263 / NCTC 9343 / Onslow / VPI 2553 / EN-2).